The primary structure comprises 233 residues: tRNA (guanine-N(7)-)-methyltransferase (233 aa).

S-adenosyl-L-methionine contacts are provided by glutamate 62, glutamate 87, aspartate 114, and aspartate 136. The active site involves aspartate 136. Substrate contacts are provided by residues lysine 140, aspartate 172, and 211–214; that span reads TRYE.

This sequence belongs to the class I-like SAM-binding methyltransferase superfamily. TrmB family.

The enzyme catalyses guanosine(46) in tRNA + S-adenosyl-L-methionine = N(7)-methylguanosine(46) in tRNA + S-adenosyl-L-homocysteine. It participates in tRNA modification; N(7)-methylguanine-tRNA biosynthesis. Catalyzes the formation of N(7)-methylguanine at position 46 (m7G46) in tRNA. The polypeptide is tRNA (guanine-N(7)-)-methyltransferase (Erythrobacter litoralis (strain HTCC2594)).